A 336-amino-acid polypeptide reads, in one-letter code: Dihydroorotate dehydrogenase (quinone) (336 aa).

Residues 62-66 (AGLDK) and threonine 86 contribute to the FMN site. A substrate-binding site is contributed by lysine 66. 111–115 (NRMGF) lines the substrate pocket. The FMN site is built by asparagine 139 and asparagine 172. A substrate-binding site is contributed by asparagine 172. Serine 175 functions as the Nucleophile in the catalytic mechanism. Asparagine 177 lines the substrate pocket. FMN-binding residues include lysine 217 and threonine 245. A substrate-binding site is contributed by 246 to 247 (NT). Residues glycine 268, glycine 297, and 318–319 (YT) each bind FMN.

The protein belongs to the dihydroorotate dehydrogenase family. Type 2 subfamily. Monomer. The cofactor is FMN.

The protein resides in the cell membrane. It catalyses the reaction (S)-dihydroorotate + a quinone = orotate + a quinol. Its pathway is pyrimidine metabolism; UMP biosynthesis via de novo pathway; orotate from (S)-dihydroorotate (quinone route): step 1/1. Functionally, catalyzes the conversion of dihydroorotate to orotate with quinone as electron acceptor. This Pseudoalteromonas translucida (strain TAC 125) protein is Dihydroorotate dehydrogenase (quinone).